Here is a 119-residue protein sequence, read N- to C-terminus: Large ribosomal subunit protein bL20 (119 aa).

The protein belongs to the bacterial ribosomal protein bL20 family.

Its function is as follows. Binds directly to 23S ribosomal RNA and is necessary for the in vitro assembly process of the 50S ribosomal subunit. It is not involved in the protein synthesizing functions of that subunit. The polypeptide is Large ribosomal subunit protein bL20 (Xylella fastidiosa (strain M23)).